A 162-amino-acid chain; its full sequence is Epoxidase pydX (162 aa).

An N-terminal signal peptide occupies residues 1–26 (MSLIALPLRLLRLLPAITSTWVLAFA). Transmembrane regions (helical) follow at residues 62-82 (WILIVVYPINYALGVVNLFVG) and 89-109 (TGAMSWYTIGLLFSLAHMGYM). N-linked (GlcNAc...) asparagine glycosylation is found at Asn127 and Asn139.

This sequence belongs to the epoxidase xenD family.

The protein localises to the membrane. The protein operates within mycotoxin biosynthesis. Epoxidase; part of the gene cluster that mediates the biosynthesis of pyrrocidines, fungal natural products containing a macrocyclic para-cyclophane connected to a decahydrofluorene ring system that show potent antibiotic activities toward Gram-negative bacteria. Within the pathway, pydX functions synergistically with pydB, pydE and pydZ to form the cyclophane. The pathway begins with the PKS-NRPS pydA which, with the help of the trans-enoyl reductase pydC, synthesizes the polyketide-tyrosyl acyl thioester product which can be reductively off-loaded by the terminal reductase (R) domain in pydA. The alpha/beta hydrolase pydG is then required to catalyze the subsequent Knoevenagel condensation that affords the 3-pyrrolin-2-one ring, whereas the four proteins pydB, pydE, pydX and pydZ then function synergistically to form the cyclophane. PydB and the membrane-bound pydX and pydZ are lipid-binding proteins that can sequester and mold the pdyG product into the inverse S-shape. Binding of the medium chain reductase pydE to the complex would trigger the cascade oxidative cyclization. PydY is involved in the Diels-Alder cycloaddition that forms the decahydrofluorene core. Additional non-enzymatic hydroxylation yields pyrrocidine A2 which can be further reduced into pyrrocidine B by an endogenous reductase. This is Epoxidase pydX from Acremonium sp.